The following is a 189-amino-acid chain: Peptidyl-tRNA hydrolase (189 aa).

Tyrosine 15 contacts tRNA. The active-site Proton acceptor is histidine 20. Phenylalanine 66, asparagine 68, and asparagine 114 together coordinate tRNA.

It belongs to the PTH family. Monomer.

It is found in the cytoplasm. It carries out the reaction an N-acyl-L-alpha-aminoacyl-tRNA + H2O = an N-acyl-L-amino acid + a tRNA + H(+). In terms of biological role, hydrolyzes ribosome-free peptidyl-tRNAs (with 1 or more amino acids incorporated), which drop off the ribosome during protein synthesis, or as a result of ribosome stalling. Functionally, catalyzes the release of premature peptidyl moieties from peptidyl-tRNA molecules trapped in stalled 50S ribosomal subunits, and thus maintains levels of free tRNAs and 50S ribosomes. This chain is Peptidyl-tRNA hydrolase, found in Streptococcus pneumoniae (strain JJA).